The chain runs to 375 residues: Cytochrome P450 monooxygenase ACRTS1 (375 aa).

C321 is a binding site for heme.

The protein belongs to the cytochrome P450 family. It depends on heme as a cofactor.

It participates in mycotoxin biosynthesis. Cytochrome P450 monooxygenase; part of the gene cluster that mediates the biosynthesis of the host-selective toxins (HSTs) ACR-toxins responsible for brown spot of rough lemon disease by the rough lemon pathotype. ACR-toxins cause uncoupling of mitochondrial oxidative-phosphorylation similar to that of classic protonophore. The structure of the major form of ACR-toxin (ACR-toxin I) consists of an alpha-dihydropyrone ring in a 19-carbon polyalcohol, a typical polyketide structure. Minor toxins were characterized as having a pyrone ring with polyalcohol side chains different in length and showing weaker toxicity. The highly reducing polyketide synthase ACRTS2 has all necessary enzymatic domains for multiple cycles of condensation and beta-keto processing. The cytochrome P450 monooxygenase ACRTS1 has also been shown to be essential for ACR-toxin biosynthesis, however its exact role in the pathway has not been elucidated yet. This chain is Cytochrome P450 monooxygenase ACRTS1, found in Alternaria alternata (Alternaria rot fungus).